Consider the following 264-residue polypeptide: H-2 class II histocompatibility antigen, E-D beta chain (264 aa).

An N-terminal signal peptide occupies residues 1-31 (MVWLPRVPCVAAVILLLTVLSPPVALVRDTR). The beta-1 stretch occupies residues 32–121 (PRFLEYVTSE…ISDKFLVRRR (90 aa)). The Extracellular segment spans residues 32-225 (PRFLEYVTSE…KAQSTSAQNK (194 aa)). 2 disulfides stabilise this stretch: C42-C106 and C144-C200. An N-linked (GlcNAc...) asparagine glycan is attached at N46. A beta-2 region spans residues 122 to 215 (VEPTVTVYPT…SLTDPVTVEW (94 aa)). One can recognise an Ig-like C1-type domain in the interval 124–214 (PTVTVYPTKT…PSLTDPVTVE (91 aa)). The tract at residues 216-225 (KAQSTSAQNK) is connecting peptide. A helical membrane pass occupies residues 226–248 (MLSGVGGFVLGLLFLGAGLFIYF). At 249 to 264 (RNQKGQSGLQPTGLLS) the chain is on the cytoplasmic side.

This sequence belongs to the MHC class II family.

It localises to the membrane. In Mus musculus (Mouse), this protein is H-2 class II histocompatibility antigen, E-D beta chain.